The chain runs to 1453 residues: MMLPQNSWHIDFGRCCCHQNLFSAVVTCILLLNSCFLISSFNGTDLELRLVNGDGPCSGTVEVKFQGQWGTVCDDGWNTTASTVVCKQLGCPFSFAMFRFGQAVTRHGKIWLDDVSCYGNESALWECQHREWGSHNCYHGEDVGVNCYGEANLGLRLVDGNNSCSGRVEVKFQERWGTICDDGWNLNTAAVVCRQLGCPSSFISSGVVNSPAVLRPIWLDDILCQGNELALWNCRHRGWGNHDCSHNEDVTLTCYDSSDLELRLVGGTNRCMGRVELKIQGRWGTVCHHKWNNAAADVVCKQLGCGTALHFAGLPHLQSGSDVVWLDGVSCSGNESFLWDCRHSGTVNFDCLHQNDVSVICSDGADLELRLADGSNNCSGRVEVRIHEQWWTICDQNWKNEQALVVCKQLGCPFSVFGSRRAKPSNEARDIWINSISCTGNESALWDCTYDGKAKRTCFRRSDAGVICSDKADLDLRLVGAHSPCYGRLEVKYQGEWGTVCHDRWSTRNAAVVCKQLGCGKPLHVFGMTYFKEASGPIWLDDVSCIGNESNIWDCEHSGWGKHNCVHREDVIVTCSGDATWGLRLVGGSNRCSGRLEVYFQGRWGTVCDDGWNSKAAAVVCSQLDCPSSIIGMGLGNASTGYGKIWLDDVSCDGDESDLWSCRNSGWGNNDCSHSEDVGVICSDASDMELRLVGGSSRCAGKVEVNVQGAVGILCANGWGMNIAEVVCRQLECGSAIRVSREPHFTERTLHILMSNSGCTGGEASLWDCIRWEWKQTACHLNMEASLICSAHRQPRLVGADMPCSGRVEVKHADTWRSVCDSDFSLHAANVLCRELNCGDAISLSVGDHFGKGNGLTWAEKFQCEGSETHLALCPIVQHPEDTCIHSREVGVVCSRYTDVRLVNGKSQCDGQVEINVLGHWGSLCDTHWDPEDARVLCRQLSCGTALSTTGGKYIGERSVRVWGHRFHCLGNESLLDNCQMTVLGAPPCIHGNTVSVICTGSLTQPLFPCLANVSDPYLSAVPEGSALICLEDKRLRLVDGDSRCAGRVEIYHDGFWGTICDDGWDLSDAHVVCQKLGCGVAFNATVSAHFGEGSGPIWLDDLNCTGMESHLWQCPSRGWGQHDCRHKEDAGVICSEFTALRLYSETETESCAGRLEVFYNGTWGSVGRRNITTAIAGIVCRQLGCGENGVVSLAPLSKTGSGFMWVDDIQCPKTHISIWQCLSAPWERRISSPAEETWITCEDRIRVRGGDTECSGRVEIWHAGSWGTVCDDSWDLAEAEVVCQQLGCGSALAALRDASFGQGTGTIWLDDMRCKGNESFLWDCHAKPWGQSDCGHKEDAGVRCSGQSLKSLNASSGHLALILSSIFGLLLLVLFILFLTWCRVQKQKHLPLRVSTRRRGSLEENLFHEMETCLKREDPHGTRTSDDTPNHGCEDASDTSLLGVLPASEATK.

Residues 1–40 (MMLPQNSWHIDFGRCCCHQNLFSAVVTCILLLNSCFLISS) form the signal peptide. At 41–1359 (FNGTDLELRL…LKSLNASSGH (1319 aa)) the chain is on the extracellular side. Residues asparagine 42, asparagine 78, asparagine 120, and asparagine 161 are each glycosylated (N-linked (GlcNAc...) asparagine). SRCR domains are found at residues 48 to 148 (LRLV…VNCY), 155 to 255 (LRLV…LTCY), 262 to 362 (LRLV…VICS), 369 to 469 (LRLA…VICS), 476 to 576 (LRLV…VTCS), 583 to 683 (LRLV…VICS), 690 to 790 (LRLV…LICS), 795 to 895 (PRLV…VVCS), and 900 to 1000 (VRLV…VICT). Cystine bridges form between cysteine 73/cysteine 137, cysteine 86/cysteine 147, and cysteine 117/cysteine 127. 6 disulfides stabilise this stretch: cysteine 180-cysteine 244, cysteine 193-cysteine 254, cysteine 224-cysteine 234, cysteine 287-cysteine 351, cysteine 300-cysteine 361, and cysteine 331-cysteine 341. N-linked (GlcNAc...) asparagine glycans are attached at residues asparagine 334, asparagine 377, asparagine 441, asparagine 548, and asparagine 637. Disulfide bonds link cysteine 394–cysteine 458, cysteine 407–cysteine 468, cysteine 438–cysteine 448, cysteine 501–cysteine 565, cysteine 514–cysteine 575, cysteine 545–cysteine 555, cysteine 608–cysteine 672, cysteine 621–cysteine 682, cysteine 652–cysteine 662, cysteine 715–cysteine 779, cysteine 728–cysteine 789, cysteine 759–cysteine 769, cysteine 820–cysteine 884, cysteine 833–cysteine 894, cysteine 864–cysteine 874, cysteine 925–cysteine 989, cysteine 938–cysteine 999, and cysteine 969–cysteine 979. Asparagine 972, asparagine 1013, asparagine 1084, and asparagine 1104 each carry an N-linked (GlcNAc...) asparagine glycan. SRCR domains lie at 1036–1136 (LRLV…VICS), 1141–1243 (LRLY…ITCE), and 1246–1346 (IRVR…VRCS). Disulfide bonds link cysteine 1061-cysteine 1125, cysteine 1074-cysteine 1135, and cysteine 1105-cysteine 1115. N-linked (GlcNAc...) asparagine glycosylation is found at asparagine 1161 and asparagine 1171. Intrachain disulfides connect cysteine 1181–cysteine 1242, cysteine 1212–cysteine 1222, cysteine 1271–cysteine 1335, cysteine 1284–cysteine 1345, and cysteine 1315–cysteine 1325. N-linked (GlcNAc...) asparagine glycosylation is found at asparagine 1318 and asparagine 1354. Residues 1360–1380 (LALILSSIFGLLLLVLFILFL) form a helical membrane-spanning segment. At 1381-1453 (TWCRVQKQKH…GVLPASEATK (73 aa)) the chain is on the cytoplasmic side. Positions 1418–1435 (EDPHGTRTSDDTPNHGCE) are enriched in basic and acidic residues. The disordered stretch occupies residues 1418 to 1453 (EDPHGTRTSDDTPNHGCEDASDTSLLGVLPASEATK).

Isoform 1 is highly expressed in the spleen, lymph nodes, thymus, and fetal liver and weakly expressed in bone marrow and no expression was found in peripheral blood leukocytes. Isoform 1 expression is restricted to the monocyte and macrophage cell lines. Isoform 2 is only expressed in spleen.

The protein resides in the cell membrane. Its subcellular location is the secreted. This Homo sapiens (Human) protein is Scavenger receptor cysteine-rich type 1 protein M160 (CD163L1).